The following is a 193-amino-acid chain: Ion-translocating oxidoreductase complex subunit A (193 aa).

Transmembrane regions (helical) follow at residues 5 to 25 (LLLLISTVLVNNFVLVKFLGL), 39 to 59 (VGMGLATTFVLTLTSAFAYLV), 72 to 92 (LSTLAFILVIAVVVQFTEMVI), 102 to 122 (ILGIYLPLITTNCIVLGLALL), 134 to 154 (VVYGFGGGLGFMLVLILFASL), and 170 to 190 (IAIGMVTAGLMSLAFLGFTGL).

This sequence belongs to the NqrDE/RnfAE family. As to quaternary structure, the complex is composed of six subunits: RnfA, RnfB, RnfC, RnfD, RnfE and RnfG.

Its subcellular location is the cell inner membrane. Functionally, part of a membrane-bound complex that couples electron transfer with translocation of ions across the membrane. This Tolumonas auensis (strain DSM 9187 / NBRC 110442 / TA 4) protein is Ion-translocating oxidoreductase complex subunit A.